Reading from the N-terminus, the 434-residue chain is Enolase 2 (434 aa).

Gln-171 is a binding site for (2R)-2-phosphoglycerate. Residue Glu-213 is the Proton donor of the active site. 3 residues coordinate Mg(2+): Asp-250, Glu-293, and Asp-320. 4 residues coordinate (2R)-2-phosphoglycerate: Lys-345, Arg-374, Ser-375, and Lys-396. Lys-345 functions as the Proton acceptor in the catalytic mechanism.

The protein belongs to the enolase family. It depends on Mg(2+) as a cofactor.

It is found in the cytoplasm. Its subcellular location is the secreted. The protein localises to the cell surface. The catalysed reaction is (2R)-2-phosphoglycerate = phosphoenolpyruvate + H2O. It functions in the pathway carbohydrate degradation; glycolysis; pyruvate from D-glyceraldehyde 3-phosphate: step 4/5. Catalyzes the reversible conversion of 2-phosphoglycerate (2-PG) into phosphoenolpyruvate (PEP). It is essential for the degradation of carbohydrates via glycolysis. This Streptomyces coelicolor (strain ATCC BAA-471 / A3(2) / M145) protein is Enolase 2.